The primary structure comprises 217 residues: Elongation factor Ts (217 aa).

The interval 80 to 83 (TDFV) is involved in Mg(2+) ion dislocation from EF-Tu.

The protein belongs to the EF-Ts family.

The protein resides in the cytoplasm. In terms of biological role, associates with the EF-Tu.GDP complex and induces the exchange of GDP to GTP. It remains bound to the aminoacyl-tRNA.EF-Tu.GTP complex up to the GTP hydrolysis stage on the ribosome. The chain is Elongation factor Ts from Carboxydothermus hydrogenoformans (strain ATCC BAA-161 / DSM 6008 / Z-2901).